Reading from the N-terminus, the 182-residue chain is Alkyl hydroperoxide reductase AhpD (182 aa).

The active-site Proton donor is the Cys-132. Cys-132 and Cys-135 are oxidised to a cystine. Cys-135 functions as the Cysteine sulfenic acid (-SOH) intermediate in the catalytic mechanism.

This sequence belongs to the AhpD family.

The catalysed reaction is N(6)-[(R)-dihydrolipoyl]-L-lysyl-[lipoyl-carrier protein] + a hydroperoxide = N(6)-[(R)-lipoyl]-L-lysyl-[lipoyl-carrier protein] + an alcohol + H2O. Functionally, antioxidant protein with alkyl hydroperoxidase activity. Required for the reduction of the AhpC active site cysteine residues and for the regeneration of the AhpC enzyme activity. This is Alkyl hydroperoxide reductase AhpD from Bradyrhizobium diazoefficiens (strain JCM 10833 / BCRC 13528 / IAM 13628 / NBRC 14792 / USDA 110).